The chain runs to 554 residues: Exodeoxyribonuclease 7 large subunit (554 aa).

It belongs to the XseA family. Heterooligomer composed of large and small subunits.

It is found in the cytoplasm. The catalysed reaction is Exonucleolytic cleavage in either 5'- to 3'- or 3'- to 5'-direction to yield nucleoside 5'-phosphates.. In terms of biological role, bidirectionally degrades single-stranded DNA into large acid-insoluble oligonucleotides, which are then degraded further into small acid-soluble oligonucleotides. The chain is Exodeoxyribonuclease 7 large subunit from Chlamydia pneumoniae (Chlamydophila pneumoniae).